The chain runs to 274 residues: MRHFIYQDEKSHKFRAVEQQGNELHISWGKVGTKGQSQIKSFSDAAAAAKAELKLIAEKVKKGYVEQAKDNSLQPSQTVTGSLKVADLSTIIQEQPSFVAETRAPDKNTDAVLPWLAKDIAVVFPPEVVHTTLSHRRFPGVPVQQADKLPQLRRLACSVSQRDNKTATFDFSACSLEWQNTVAQAISQIDGLKTTQLPSPVMAVLTALEMKCTRYKVREDVMDQIVQEGGLEYATDVIIHLQQIDIEWDYANNVIIILPSGIAPSYLEQYSRFE.

The WGR domain occupies 2-78 (RHFIYQDEKS…KDNSLQPSQT (77 aa)).

In terms of biological role, has been implicated in selenate reduction; a mini-Tn10 insertion mutant in 'molR', (which was mapped to 47.3 centisomes i.e. this locus), is defective in the reduction of selenate. The sequence is that of Protein YehF (yehF) from Escherichia coli (strain K12).